Consider the following 145-residue polypeptide: Halilectin 3, alpha chain (145 aa).

N-linked (GlcNAc...) asparagine glycosylation is present at N73.

In terms of assembly, probable heterotrimer consisting of an alpha chain and two beta chains. The alpha chain can probably have different glycosylation states. In terms of processing, glycosylated.

Lectin with affinity for N-acetyl-galactosamine, carragenan and glycoprotein porcine stomach mucin (PSM). Has metal-independent hemagglutinating activity towards erythrocytes from rabbit and human. Hemagglutinating activity is not inhibited by D-galactose, D-glucose, D-mannose, D-fucose, methyl-alpha-D-galactopyranoside, methyl-alpha-D-glucopyranoside, N-acetyl-glucosamine, N-acetyl-mannosamine, D-fructose, alpha-D-lactose, beta-D-lactose, D-lactulose, D-sucrose, fucoidan or glycoproteins thyroglobulin and ovalmucoid. This Haliclona caerulea (Blue Caribbean sponge) protein is Halilectin 3, alpha chain.